A 444-amino-acid chain; its full sequence is CBL-interacting serine/threonine-protein kinase 1 (444 aa).

The Protein kinase domain maps to 20–275 (YELGRTLGEG…VVGIKASEWF (256 aa)). ATP contacts are provided by residues 26 to 34 (LGEGNFGKV) and Lys-49. Asp-143 serves as the catalytic Proton acceptor. Residues 161-190 (DFGLSALPQHFRDDGLLHTTCGSPNYVAPE) form an activation loop region. Ser-165 is subject to Phosphoserine. A Phosphothreonine modification is found at Thr-179. One can recognise an NAF domain in the interval 313–337 (DSPTIINAFQLIGMSSFLDLSGFFE). The PPI stretch occupies residues 343–372 (ERRIRFTSNSSAKDLLEKIETAVTEMGFSV).

This sequence belongs to the protein kinase superfamily. CAMK Ser/Thr protein kinase family. SNF1 subfamily. As to quaternary structure, interacts with CBL1. Interacts with CBL2. Interacts with CBL3. Interacts with CBL9. Interacts with ECT1 and ECT2. It depends on Mn(2+) as a cofactor. In terms of processing, autophosphorylated. Ubiquitous.

The enzyme catalyses L-seryl-[protein] + ATP = O-phospho-L-seryl-[protein] + ADP + H(+). It carries out the reaction L-threonyl-[protein] + ATP = O-phospho-L-threonyl-[protein] + ADP + H(+). Its function is as follows. CIPK serine-threonine protein kinases interact with CBL proteins. Binding of a CBL protein to the regulatory NAF domain of CIPK protein lead to the activation of the kinase in a calcium-dependent manner. In Arabidopsis thaliana (Mouse-ear cress), this protein is CBL-interacting serine/threonine-protein kinase 1 (CIPK1).